The following is a 243-amino-acid chain: Protein canopy homolog 3 (243 aa).

Positions 1-15 (MWFLFLLLPLWAGCA) are cleaved as a signal peptide. The Saposin B-type domain maps to 27 to 236 (SKCEVCKYVA…KEEKKQMDQP (210 aa)). Cystine bridges form between Cys29–Cys188, Cys32–Cys176, and Cys86–Cys148. Positions 136–160 (ETSAEVADMKKQCDVMMENYEEVIE) form a coiled coil. The interval 186–243 (QSCLSEQGDSRKGDTGPSTGTKKQKKQGEKKNKSKKQNSGSKEEKKQMDQPMAAKEEL) is disordered. Positions 226-243 (SKEEKKQMDQPMAAKEEL) are enriched in basic and acidic residues.

It belongs to the canopy family.

Its subcellular location is the endoplasmic reticulum. Functionally, toll-like receptor (TLR)-specific co-chaperone for HSP90B1. Required for proper TLR folding and hence controls TLR exit from the endoplasmic reticulum. Consequently, required for immune responses. This is Protein canopy homolog 3 (cnpy3) from Xenopus laevis (African clawed frog).